Consider the following 360-residue polypeptide: Phospho-N-acetylmuramoyl-pentapeptide-transferase (360 aa).

A run of 10 helical transmembrane segments spans residues 26-46 (TILG…AVIQ), 70-90 (GTPT…TLLW), 97-117 (YVWV…VDDY), 132-152 (AKFF…FSTA), 168-188 (VVLP…VGSS), 199-219 (GLAI…AYAT), 236-256 (AGEV…FLWF), 263-283 (VFMG…LAVV), 288-308 (LVLL…MLQV), and 338-358 (VIVR…AMLK).

The protein belongs to the glycosyltransferase 4 family. MraY subfamily. Requires Mg(2+) as cofactor.

The protein localises to the cell inner membrane. It carries out the reaction UDP-N-acetyl-alpha-D-muramoyl-L-alanyl-gamma-D-glutamyl-meso-2,6-diaminopimeloyl-D-alanyl-D-alanine + di-trans,octa-cis-undecaprenyl phosphate = di-trans,octa-cis-undecaprenyl diphospho-N-acetyl-alpha-D-muramoyl-L-alanyl-D-glutamyl-meso-2,6-diaminopimeloyl-D-alanyl-D-alanine + UMP. The protein operates within cell wall biogenesis; peptidoglycan biosynthesis. Catalyzes the initial step of the lipid cycle reactions in the biosynthesis of the cell wall peptidoglycan: transfers peptidoglycan precursor phospho-MurNAc-pentapeptide from UDP-MurNAc-pentapeptide onto the lipid carrier undecaprenyl phosphate, yielding undecaprenyl-pyrophosphoryl-MurNAc-pentapeptide, known as lipid I. This Alkalilimnicola ehrlichii (strain ATCC BAA-1101 / DSM 17681 / MLHE-1) protein is Phospho-N-acetylmuramoyl-pentapeptide-transferase.